A 617-amino-acid chain; its full sequence is Vacuolar protein sorting-associated protein 33B (617 aa).

The protein belongs to the STXBP/unc-18/SEC1 family. In terms of assembly, probable core component of the class C core vacuole/endosome tethering (CORVET) complex. The common core is composed of the class C Vps proteins vps-11, vps-16 and vps-18, and which further associates with vps-8 and vps-33.2. Interacts with spe-39. In terms of tissue distribution, broadly expressed in somatic tissues including the pharynx, intestine, spermatheca, and in coelomocytes. Expressed in the lining of the gut lumen.

Its subcellular location is the early endosome. It is found in the late endosome membrane. The protein resides in the lysosome membrane. The protein localises to the cytoplasmic vesicle. It localises to the clathrin-coated vesicle. Its subcellular location is the recycling endosome. Plays a role in vesicle-mediated protein trafficking to lysosomal compartments and in membrane docking/fusion reactions of late endosomes/lysosomes. Believed to act as a component of the putative CORVET endosomal tethering complex which is proposed to be involved in the rab-5-to-rab-7 endosome conversion probably implicating sand-1, and via binding SNAREs and SNARE complexes to mediate tethering and docking events during SNARE-mediated membrane fusion. The CORVET complex is proposed to function as a rab-5 effector to mediate early endosome fusion probably in specific endosome subpopulations. Most likely within the CORVET complex, it is involved in the fusion of endocytic compartments. Required for sperm development and function. This is Vacuolar protein sorting-associated protein 33B from Caenorhabditis elegans.